We begin with the raw amino-acid sequence, 89 residues long: Small ribosomal subunit protein uS15 (89 aa).

This sequence belongs to the universal ribosomal protein uS15 family. Part of the 30S ribosomal subunit. Forms a bridge to the 50S subunit in the 70S ribosome, contacting the 23S rRNA.

Functionally, one of the primary rRNA binding proteins, it binds directly to 16S rRNA where it helps nucleate assembly of the platform of the 30S subunit by binding and bridging several RNA helices of the 16S rRNA. Its function is as follows. Forms an intersubunit bridge (bridge B4) with the 23S rRNA of the 50S subunit in the ribosome. The chain is Small ribosomal subunit protein uS15 from Paraburkholderia phymatum (strain DSM 17167 / CIP 108236 / LMG 21445 / STM815) (Burkholderia phymatum).